The following is a 361-amino-acid chain: MKQSIRDKLEHLAGRLAELDRELSSEDATRDMNAFRDLSRERAELEPVVALYGAYRQAEQDCATARELLDDPEMQELGRSELEAGEARIAALDGDLQRALLPRDPNDERNLFLEIRAGTGGDEAALFAGDLLRMYSRYAERQRWRVEIVSSNPSDLGGYKEVIARIVGAGAYSRLKFESGGHRVQRIPVTETQGRIHTSACTVAVMPEADELAAVEINPADLRIDTFRASGAGGQHINKTDSAVRITHLPTGLVVECQDDRSQHRNKAQAMAVLAARLNDAQLRARQSAEAATRRSLIGSGDRSERIRTYNFPQGRVTDHRINLTLYKLDAVMQGELDELLAALVLEHQAEQLAALAEEGL.

An N5-methylglutamine modification is found at Gln235.

It belongs to the prokaryotic/mitochondrial release factor family. Methylated by PrmC. Methylation increases the termination efficiency of RF1.

The protein localises to the cytoplasm. Its function is as follows. Peptide chain release factor 1 directs the termination of translation in response to the peptide chain termination codons UAG and UAA. The polypeptide is Peptide chain release factor 1 (Azoarcus sp. (strain BH72)).